A 395-amino-acid chain; its full sequence is Phosphopentomutase (395 aa).

6 residues coordinate Mn(2+): D14, D289, H294, D330, H331, and H342.

This sequence belongs to the phosphopentomutase family. The cofactor is Mn(2+).

Its subcellular location is the cytoplasm. It catalyses the reaction 2-deoxy-alpha-D-ribose 1-phosphate = 2-deoxy-D-ribose 5-phosphate. The catalysed reaction is alpha-D-ribose 1-phosphate = D-ribose 5-phosphate. The protein operates within carbohydrate degradation; 2-deoxy-D-ribose 1-phosphate degradation; D-glyceraldehyde 3-phosphate and acetaldehyde from 2-deoxy-alpha-D-ribose 1-phosphate: step 1/2. Functionally, isomerase that catalyzes the conversion of deoxy-ribose 1-phosphate (dRib-1-P) and ribose 1-phosphate (Rib-1-P) to deoxy-ribose 5-phosphate (dRib-5-P) and ribose 5-phosphate (Rib-5-P), respectively. In Mycoplasmopsis pulmonis (strain UAB CTIP) (Mycoplasma pulmonis), this protein is Phosphopentomutase.